The sequence spans 176 residues: MDDTGSNPPIAGPFQPAHPPTLDNPITEAPAPHTTPVAGKTGPDAAAQGMGGGARGSISSESSKLIDESTKLFPNVAGAASEAFRSERSASTSSTTSETGSDRPMGSASTVTEVPYGRRPSHGHGGHHGLFEGLMDQKRRNDPASVARRQSLNEQRPVPQGFIAKMWDNWVRGTTP.

2 disordered regions span residues 1–66 (MDDT…SKLI) and 79–162 (AASE…PQGF). Low complexity predominate over residues 79–99 (AASEAFRSERSASTSSTTSET).

This Neurospora crassa (strain ATCC 24698 / 74-OR23-1A / CBS 708.71 / DSM 1257 / FGSC 987) protein is Conidiation-specific protein 8 (con-8).